A 780-amino-acid polypeptide reads, in one-letter code: Neutral ceramidase (780 aa).

The Cytoplasmic portion of the chain corresponds to 1 to 12 (MAKRTFSNLETF). The chain crosses the membrane as a helical; Signal-anchor for type II membrane protein span at residues 13 to 33 (LIFLLVMMSAITVALLSLLFI). Over 34 to 780 (TSGTIENHKD…TSPAFEVVTI (747 aa)) the chain is Lumenal. The tract at residues 47–90 (HFFSTTQSPPATQGSTAAQRSTATQHSTATQSSTATQTSPVPLT) is disordered. The span at 57–85 (ATQGSTAAQRSTATQHSTATQSSTATQTS) shows a compositional bias: low complexity. Thr62 carries an O-linked (GalNAc...) threonine glycan. Ser67 carries an O-linked (GalNAc...) serine glycan. O-linked (GalNAc...) threonine glycans are attached at residues Thr68 and Thr70. A glycan (O-linked (GalNAc...) serine) is linked at Ser73. Residues Thr74 and Thr76 are each glycosylated (O-linked (GalNAc...) threonine). 2 O-linked (GalNAc...) serine glycosylation sites follow: Ser78 and Ser79. Thr80, Thr82, and Thr84 each carry an O-linked (GalNAc...) threonine glycan. Asn98 carries an N-linked (GlcNAc...) asparagine glycan. Leu134 contacts Ca(2+). A glycan (N-linked (GlcNAc...) asparagine) is linked at Asn151. Position 194 (His194) interacts with Zn(2+). Asn217 carries N-linked (GlcNAc...) asparagine glycosylation. Position 303 (His303) interacts with Zn(2+). Asn308 is a glycosylation site (N-linked (GlcNAc...) asparagine). Residue Ser354 is the Nucleophile of the active site. 2 disulfide bridges follow: Cys362-Cys376 and Cys369-Cys384. Residues Asn440 and Asn468 are each glycosylated (N-linked (GlcNAc...) asparagine). Cysteines 448 and 498 form a disulfide. Glu540 lines the Zn(2+) pocket. Asn564 carries an N-linked (GlcNAc...) asparagine glycan. Residue Tyr579 coordinates Zn(2+). Asp712, Ser714, and Thr717 together coordinate Ca(2+). The N-linked (GlcNAc...) asparagine glycan is linked to Asn730. A required for correct folding and localization region spans residues 770–780 (GTSPAFEVVTI). Thr779 carries an O-linked (GalNAc...) threonine glycan.

It belongs to the neutral ceramidase family. It depends on Zn(2+) as a cofactor. In terms of processing, proteolytic cleavage of the N-terminus removes the signal-anchor and produces a soluble form of the protein. Post-translationally, N-glycosylated. Required for enzyme activity. O-glycosylated. Required to retain it as a type II membrane protein at the cell surface. In terms of processing, phosphorylated. May prevent ubiquitination and subsequent degradation. Post-translationally, ubiquitinated, leading to its degradation by the proteasome. Ubiquitination is triggered by nitric oxide. As to expression, primarily expressed in intestine. Ubiquitously expressed with higher levels in kidney, skeletal muscle and heart. The ubiquitous expression observed for ASAH2 might be an experimental artifact due to the paralog ASAH2B.

It is found in the cell membrane. It localises to the membrane raft. Its subcellular location is the membrane. The protein resides in the caveola. The protein localises to the golgi apparatus membrane. It is found in the mitochondrion. It localises to the secreted. Its subcellular location is the extracellular exosome. The catalysed reaction is an N-acylsphing-4-enine + H2O = sphing-4-enine + a fatty acid. The enzyme catalyses N-dodecanoylsphing-4-enine + H2O = dodecanoate + sphing-4-enine. It carries out the reaction N-hexadecanoylsphing-4-enine + H2O = sphing-4-enine + hexadecanoate. It catalyses the reaction N-octanoylsphing-4-enine + H2O = octanoate + sphing-4-enine. The catalysed reaction is N-(hexanoyl)sphing-4-enine + H2O = hexanoate + sphing-4-enine. The enzyme catalyses N-octadecanoylsphing-4-enine + H2O = sphing-4-enine + octadecanoate. It carries out the reaction N-tetradecanoylsphing-4-enine + H2O = tetradecanoate + sphing-4-enine. It catalyses the reaction N-(9Z-octadecenoyl)-sphing-4-enine + H2O = sphing-4-enine + (9Z)-octadecenoate. The catalysed reaction is N-(15Z-tetracosenoyl)-sphing-4-enine + H2O = (15Z)-tetracosenoate + sphing-4-enine. The enzyme catalyses sphinganine + hexadecanoate = N-hexadecanoylsphinganine + H2O. It carries out the reaction N-(octadecanoyl)-sphinganine + H2O = sphinganine + octadecanoate. The protein operates within lipid metabolism; sphingolipid metabolism. Inhibited by dithiothreitol (DTT) and 2-mercaptoethanol. Activity is mildly stimulated by Ca(2+) and Mg(2+), but is not inhibited by EDTA. Activity is inhibited by millimolar levels of Fe(2+), Zn(2+) and Cu(2+). Inhibited by cholesterol. In terms of biological role, plasma membrane ceramidase that hydrolyzes sphingolipid ceramides into sphingosine and free fatty acids at neutral pH. Ceramides, sphingosine, and its phosphorylated form sphingosine-1-phosphate are bioactive lipids that mediate cellular signaling pathways regulating several biological processes including cell proliferation, apoptosis and differentiation. Also catalyzes the reverse reaction allowing the synthesis of ceramides from fatty acids and sphingosine. Together with sphingomyelinase, participates in the production of sphingosine and sphingosine-1-phosphate from the degradation of sphingomyelin, a sphingolipid enriched in the plasma membrane of cells. Also participates in the hydrolysis of ceramides from the extracellular milieu allowing the production of sphingosine-1-phosphate inside and outside cells. This is the case for instance with the digestion of dietary sphingolipids in the intestinal tract. This chain is Neutral ceramidase (ASAH2), found in Homo sapiens (Human).